The following is a 220-amino-acid chain: Thiopurine S-methyltransferase (220 aa).

S-adenosyl-L-methionine is bound by residues W14, L49, E70, and R127.

The protein belongs to the class I-like SAM-binding methyltransferase superfamily. TPMT family.

It is found in the cytoplasm. It carries out the reaction S-adenosyl-L-methionine + a thiopurine = S-adenosyl-L-homocysteine + a thiopurine S-methylether.. In Gluconobacter oxydans (strain 621H) (Gluconobacter suboxydans), this protein is Thiopurine S-methyltransferase.